Here is a 109-residue protein sequence, read N- to C-terminus: Hainantoxin-XVIII-5 (109 aa).

Residues 1–18 (MKLSIIIIATSLVIAVVA) form the signal peptide. A propeptide spanning residues 19-46 (FPSKDSKAIENDKTEQRMEIVVQETARA) is cleaved from the precursor. Disulfide bonds link Cys-47-Cys-62, Cys-55-Cys-68, Cys-59-Cys-108, and Cys-61-Cys-81.

This sequence belongs to the neurotoxin 25 family. F7 subfamily. Expressed by the venom gland.

It localises to the secreted. Its function is as follows. Putative ion channel inhibitor. The sequence is that of Hainantoxin-XVIII-5 from Cyriopagopus hainanus (Chinese bird spider).